A 295-amino-acid chain; its full sequence is Non-selective voltage-gated ion channel VDAC2 (295 aa).

ATP is bound by residues K24 and K32. The residue at position 32 (K32) is an N6-acetyllysine; alternate. Residue K32 is modified to N6-succinyllysine; alternate. K32 is covalently cross-linked (Glycyl lysine isopeptide (Lys-Gly) (interchain with G-Cter in ubiquitin); alternate). 2 beta stranded membrane-spanning segments follow: residues 38–47 (LVKLDVKTKS) and 51–59 (VEFSTSGSS). Glycyl lysine isopeptide (Lys-Gly) (interchain with G-Cter in ubiquitin) cross-links involve residues K65 and K73. The next 4 beta stranded transmembrane spans lie at 66–76 (VSGTLETKYKW), 81–88 (LTFTEKWN), 92–101 (TLGTEIAIED), and 107–116 (LKLTFDTTFS). K121 is subject to N6-acetyllysine; alternate. K121 is covalently cross-linked (Glycyl lysine isopeptide (Lys-Gly) (interchain with G-Cter in ubiquitin); alternate). Glycyl lysine isopeptide (Lys-Gly) (interchain with G-Cter in ubiquitin) cross-links involve residues K122 and K125. 4 consecutive transmembrane segments (beta stranded) span residues 123-132 (SGKIKSAYKR), 135-142 (INLGCDVD), 149-157 (AIHGSAVFG), and 162-170 (LAGYQMTFD). Residue K173 forms a Glycyl lysine isopeptide (Lys-Gly) (interchain with G-Cter in ubiquitin) linkage. Beta stranded transmembrane passes span 175 to 187 (KLTRSNFAVGYRT), 190 to 197 (FQLHTNVN), 201 to 210 (EFGGSIYQKV), 214 to 223 (FDTSVNLAWT), 230 to 239 (RFGIAAKYQL), and 243 to 250 (ASISAKVN). S205 is modified (phosphoserine). A Phosphoserine modification is found at S252. NAD(+) is bound by residues 254–256 (LIG) and 272–276 (SALVD). The next 2 beta stranded transmembrane spans lie at 254 to 263 (LIGVGYTQTL) and 266 to 275 (GVKLTLSALV). The residue at position 278 (K278) is an N6-acetyllysine; alternate. Residue K278 forms a Glycyl lysine isopeptide (Lys-Gly) (interchain with G-Cter in ubiquitin); alternate linkage. The chain crosses the membrane as a beta stranded span at residues 285-294 (HKLGLALELE). K286 is covalently cross-linked (Glycyl lysine isopeptide (Lys-Gly) (interchain with G-Cter in ubiquitin)).

It belongs to the eukaryotic mitochondrial porin family. In terms of assembly, monomer, homodimer and higher order oligomers; formation of higher order structures is necessary for scramblase activity. Interacts with ARMC12 in a TBC1D21-dependent manner. Interacts with KLC3. Interacts with SPATA33. Interacts with PPP3CC in a SPATA33-dependent manner. Post-translationally, ubiquitinated by PRKN during mitophagy, leading to its degradation and enhancement of mitophagy. Deubiquitinated by USP30.

It is found in the mitochondrion outer membrane. It localises to the membrane. It catalyses the reaction chloride(in) = chloride(out). The enzyme catalyses K(+)(in) = K(+)(out). The catalysed reaction is a 1,2-diacyl-sn-glycero-3-phospho-L-serine(in) = a 1,2-diacyl-sn-glycero-3-phospho-L-serine(out). It carries out the reaction a 1,2-diacyl-sn-glycero-3-phosphocholine(in) = a 1,2-diacyl-sn-glycero-3-phosphocholine(out). It catalyses the reaction a 1,2-diacyl-sn-glycero-3-phospho-(1D-myo-inositol)(in) = a 1,2-diacyl-sn-glycero-3-phospho-(1D-myo-inositol)(out). Functionally, non-selective voltage-gated ion channel that mediates the transport of anions and cations through the mitochondrion outer membrane and plasma membrane. The channel adopts an open conformation at zero mV and a closed conformation at both positive and negative potentials. There are two populations of channels; the main that functions in a lower open-state conductance with lower ion selectivity, that switch, in a voltage-dependent manner, from the open to a low-conducting 'closed' state and the other that has a normal ion selectivity in the typical high conductance, 'open' state. Binds various lipids, including the sphingolipid ceramide, the phospholipid phosphatidylcholine, and the sterols cholesterol and oxysterol. Binding of ceramide promotes the mitochondrial outer membrane permeabilization (MOMP) apoptotic pathway. In terms of biological role, catalyzes the scrambling of phospholipids across the outer mitochondrial membrane; the mechanism is unrelated to channel activity and is capable of translocating both anionic and zwitterionic phospholipids. The protein is Non-selective voltage-gated ion channel VDAC2 of Mesocricetus auratus (Golden hamster).